The primary structure comprises 2172 residues: Non-reducing polyketide synthase dpfgA (2172 aa).

The segment at 74–181 (EWIKCGNSSL…LALCVGALVD (108 aa)) is N-terminal acylcarrier protein transacylase domain (SAT). Residues 389 to 783 (DDSIAIIGVS…GTNAAMLVCQ (395 aa)) form the Ketosynthase family 3 (KS3) domain. Catalysis depends on for beta-ketoacyl synthase activity residues cysteine 529, histidine 665, and histidine 706. The malonyl-CoA:ACP transacylase (MAT) domain stretch occupies residues 895–1197 (VFAGQTGRQA…SFHSILLQGQ (303 aa)). Residue serine 981 is the For acyl/malonyl transferase activity of the active site. Residues 1270-1403 (PELVSLAGPT…GTINWQGQGC (134 aa)) form an N-terminal hotdog fold region. One can recognise a PKS/mFAS DH domain in the interval 1270–1581 (PELVSLAGPT…LKRIPIRSLQ (312 aa)). Residues 1277–1575 (GPTDGETVEF…EIIGASLKRI (299 aa)) are product template (PT) domain. The tract at residues 1428–1581 (SASTVQGLFV…LKRIPIRSLQ (154 aa)) is C-terminal hotdog fold. Disordered regions lie at residues 1608–1631 (DSDSDLPDSEANSPRVGSDLHADF) and 1650–1672 (YPMDSSSFSSAQPPSSASSVLSD). Residues 1650-1668 (YPMDSSSFSSAQPPSSASS) show a composition bias toward low complexity. A Carrier domain is found at 1671 to 1747 (SDHDQESTAL…DLYRMVLNHD (77 aa)). Serine 1707 carries the post-translational modification O-(pantetheine 4'-phosphoryl)serine. Positions 1751–1773 (DRGSTVLSDKAPKSKSDSSLHGQ) are disordered. Residues 1975–2155 (EFLHRVLSRL…DAGFIHVDWT (181 aa)) form a methyltransferase (CMeT) domain region.

The protein operates within secondary metabolite biosynthesis; terpenoid biosynthesis. Non-reducing polyketide synthase; part of the gene cluster that mediates the biosynthesis of diterpenoid pyrones. The first step of the pathway is the synthesis of the alpha-pyrone moiety by the polyketide synthase dpfgA via condensation of one acetyl-CoA starter unit with 3 malonyl-CoA units and 2 methylations. The alpha-pyrone is then combined with geranylgeranyl pyrophosphate (GGPP) formed by the GGPP synthase dpfgD through the action of the prenyltransferase dpfgC to yield a linear alpha-pyrone diterpenoid. Subsequent steps in the diterpenoid pyrone biosynthetic pathway involve the decalin core formation, which is initiated by the epoxidation of the C10-C11 olefin by the FAD-dependent oxidoreductase dpfgE, and is followed by a cyclization cascade catalyzed by the terpene cyclase dpfgB. The short chain dehydrogenase/reductase dpfgG then oxidizes the 8S hydroxy group to a ketone and the short chain dehydrogenase/reductase dpfgH reduces the ketone to the 8R hydroxy group to yield higginsianin B. Higginsianin B is further methylated by the methyltransferase dpfgI to produce the intermediate named FDDP B. The cytochrome P450 monooxygenase dfgpJ then catalyzes a three-step oxidation at C-27 to generate a carboxylic acid as well as C-26 hydroxylation. Finally, methyltransferase dpfgK methylates the carboxylic acid generated by dpfgJ, yielding the final diterpenoid pyrones from the pathway which were named FDDP D and FDDP E. In Gibberella zeae (strain ATCC MYA-4620 / CBS 123657 / FGSC 9075 / NRRL 31084 / PH-1) (Wheat head blight fungus), this protein is Non-reducing polyketide synthase dpfgA.